We begin with the raw amino-acid sequence, 202 residues long: Holliday junction branch migration complex subunit RuvA (202 aa).

The interval 1–63 is domain I; it reads MIEYLKGAIV…EDAHLLYGFS (63 aa). The segment at 64 to 142 is domain II; the sequence is TKEERTLFGQ…LETSSDEILS (79 aa). The flexible linker stretch occupies residues 143–153; the sequence is ARTAVGDAALN. Residues 153-202 form a domain III region; the sequence is NTIASGEEAISALKMLGFADPAIRKAVKSILSEDSSLAVEDIIKRALRML.

It belongs to the RuvA family. As to quaternary structure, homotetramer. Forms an RuvA(8)-RuvB(12)-Holliday junction (HJ) complex. HJ DNA is sandwiched between 2 RuvA tetramers; dsDNA enters through RuvA and exits via RuvB. An RuvB hexamer assembles on each DNA strand where it exits the tetramer. Each RuvB hexamer is contacted by two RuvA subunits (via domain III) on 2 adjacent RuvB subunits; this complex drives branch migration. In the full resolvosome a probable DNA-RuvA(4)-RuvB(12)-RuvC(2) complex forms which resolves the HJ.

Its subcellular location is the cytoplasm. Its function is as follows. The RuvA-RuvB-RuvC complex processes Holliday junction (HJ) DNA during genetic recombination and DNA repair, while the RuvA-RuvB complex plays an important role in the rescue of blocked DNA replication forks via replication fork reversal (RFR). RuvA specifically binds to HJ cruciform DNA, conferring on it an open structure. The RuvB hexamer acts as an ATP-dependent pump, pulling dsDNA into and through the RuvAB complex. HJ branch migration allows RuvC to scan DNA until it finds its consensus sequence, where it cleaves and resolves the cruciform DNA. In Porphyromonas gingivalis (strain ATCC BAA-308 / W83), this protein is Holliday junction branch migration complex subunit RuvA.